A 374-amino-acid chain; its full sequence is DNA-directed RNA polymerase subunit alpha (374 aa).

An alpha N-terminal domain (alpha-NTD) region spans residues 1–270; that stretch reads MIFDEDSSSV…DQFQQFINFD (270 aa). Residues 282–374 are alpha C-terminal domain (alpha-CTD); the sequence is KDVLPYDSNL…ESLSKQYSEE (93 aa).

The protein belongs to the RNA polymerase alpha chain family. As to quaternary structure, homodimer. The RNAP catalytic core consists of 2 alpha, 1 beta, 1 beta' and 1 omega subunit. When a sigma factor is associated with the core the holoenzyme is formed, which can initiate transcription.

The catalysed reaction is RNA(n) + a ribonucleoside 5'-triphosphate = RNA(n+1) + diphosphate. In terms of biological role, DNA-dependent RNA polymerase catalyzes the transcription of DNA into RNA using the four ribonucleoside triphosphates as substrates. The protein is DNA-directed RNA polymerase subunit alpha of Ehrlichia ruminantium (strain Gardel).